A 199-amino-acid polypeptide reads, in one-letter code: NAD(P)H dehydrogenase (quinone) (199 aa).

The region spanning 4-190 is the Flavodoxin-like domain; it reads ILVLYYSMYG…AIARFQGEHV (187 aa). Residues 10–15 and 79–81 each bind FMN; these read SMYGHI and TRF. Residue Tyr-12 participates in NAD(+) binding. Trp-99 is a binding site for substrate. FMN contacts are provided by residues 114–119 and His-134; that span reads STGTGG.

The protein belongs to the WrbA family. FMN is required as a cofactor.

It carries out the reaction a quinone + NADH + H(+) = a quinol + NAD(+). It catalyses the reaction a quinone + NADPH + H(+) = a quinol + NADP(+). The chain is NAD(P)H dehydrogenase (quinone) from Yersinia pseudotuberculosis serotype O:1b (strain IP 31758).